The primary structure comprises 163 residues: UPF0763 protein CJJ81176_1011 (163 aa).

It belongs to the UPF0763 family.

In Campylobacter jejuni subsp. jejuni serotype O:23/36 (strain 81-176), this protein is UPF0763 protein CJJ81176_1011.